A 475-amino-acid chain; its full sequence is Protein FIZZY-RELATED 1 (475 aa).

Residues 1 to 27 (MEEDESTTPKKKSDSQLNLPPSMNRPT) are disordered. Residues 15–27 (SQLNLPPSMNRPT) show a composition bias toward polar residues. WD repeat units lie at residues 166–203 (QDDF…VTKL), 207–246 (GVDE…NIRT), 249–289 (GHRL…SKLK), 290–329 (GHKS…PVLR), 332–374 (EHAA…HLNC), 376–417 (DTNS…KLAT), and 420–459 (GHSY…KSQS).

Belongs to the WD repeat CDC20/Fizzy family. As to quaternary structure, associates with the APC/C complex. Interacts with CDC20-1, CDC20-2, CYCA1-1, CYCA1-2, CYCA3-4, CYCB1-1 and CYCB1-2. Binds to GIG1. In terms of tissue distribution, expressed in the root tip, predominantly in the root cap, quiescent center cells, surrounding stem cells and columella.

The protein resides in the nucleus. It functions in the pathway protein modification; protein ubiquitination. Activator protein that regulates the ubiquitin ligase activity and substrate specificity of the anaphase promoting complex/cyclosome (APC/C). Required for meristem organization and maintenance of quiescent center identity and stem cells. This chain is Protein FIZZY-RELATED 1 (FZR1), found in Arabidopsis thaliana (Mouse-ear cress).